The chain runs to 214 residues: External core antigen (214 aa).

A signal peptide spans 1–19; that stretch reads MQLFHLCLIISCTCPTVQA. An HBEAG region spans residues 25 to 27; it reads GWL. A disordered region spans residues 165–214; that stretch reads NAPILSTLPETTVVRRRDRGRSPRRRTPSPRRRRSQSPRRRRSQSRESQC. Over residues 178 to 207 the composition is skewed to basic residues; the sequence is VRRRDRGRSPRRRTPSPRRRRSQSPRRRRS. One copy of the 1; half-length repeat lies at 186-192; sequence SPRRRTP. The segment at 186 to 208 is 3 X 8 AA repeats of S-P-R-R-R-R-S-Q; that stretch reads SPRRRTPSPRRRRSQSPRRRRSQ. A propeptide spanning residues 186–214 is cleaved from the precursor; sequence SPRRRTPSPRRRRSQSPRRRRSQSRESQC. Tandem repeats lie at residues 193–200 and 201–208.

Belongs to the orthohepadnavirus precore antigen family. In terms of assembly, homodimerizes. In terms of processing, phosphorylated. Post-translationally, cleaved by host furin.

The protein localises to the secreted. It localises to the host nucleus. In terms of biological role, may regulate immune response to the intracellular capsid in acting as a T-cell tolerogen, by having an immunoregulatory effect which prevents destruction of infected cells by cytotoxic T-cells. This immune regulation may predispose to chronicity during perinatal infections and prevent severe liver injury during adult infections. This chain is External core antigen, found in Homo sapiens (Human).